The primary structure comprises 208 residues: ATP-dependent Clp protease proteolytic subunit (208 aa).

Residue S106 is the Nucleophile of the active site. H131 is an active-site residue.

This sequence belongs to the peptidase S14 family. Fourteen ClpP subunits assemble into 2 heptameric rings which stack back to back to give a disk-like structure with a central cavity, resembling the structure of eukaryotic proteasomes.

The protein localises to the cytoplasm. The enzyme catalyses Hydrolysis of proteins to small peptides in the presence of ATP and magnesium. alpha-casein is the usual test substrate. In the absence of ATP, only oligopeptides shorter than five residues are hydrolyzed (such as succinyl-Leu-Tyr-|-NHMec, and Leu-Tyr-Leu-|-Tyr-Trp, in which cleavage of the -Tyr-|-Leu- and -Tyr-|-Trp bonds also occurs).. Its function is as follows. Cleaves peptides in various proteins in a process that requires ATP hydrolysis. Has a chymotrypsin-like activity. Plays a major role in the degradation of misfolded proteins. This Roseobacter denitrificans (strain ATCC 33942 / OCh 114) (Erythrobacter sp. (strain OCh 114)) protein is ATP-dependent Clp protease proteolytic subunit.